Consider the following 113-residue polypeptide: Hemerythrin (113 aa).

Fe cation contacts are provided by H25, H54, E58, H73, H77, H101, and D106.

It belongs to the hemerythrin family. In terms of assembly, homooctamer.

Functionally, hemerythrin is a respiratory protein in blood cells of certain marine worms. The oxygen-binding site in each chain contains two iron atoms. This is Hemerythrin from Themiste dyscrita (Peanut worm).